A 248-amino-acid polypeptide reads, in one-letter code: Pyridoxine 5'-phosphate synthase (248 aa).

Asn-9 is a binding site for 3-amino-2-oxopropyl phosphate. 11–12 (DH) is a binding site for 1-deoxy-D-xylulose 5-phosphate. Residue Arg-20 participates in 3-amino-2-oxopropyl phosphate binding. His-45 (proton acceptor) is an active-site residue. The 1-deoxy-D-xylulose 5-phosphate site is built by Arg-47 and His-52. Residue Glu-72 is the Proton acceptor of the active site. Thr-102 contacts 1-deoxy-D-xylulose 5-phosphate. His-193 serves as the catalytic Proton donor. Residues Gly-194 and 215 to 216 (GH) contribute to the 3-amino-2-oxopropyl phosphate site.

Belongs to the PNP synthase family. In terms of assembly, homooctamer; tetramer of dimers.

It is found in the cytoplasm. It carries out the reaction 3-amino-2-oxopropyl phosphate + 1-deoxy-D-xylulose 5-phosphate = pyridoxine 5'-phosphate + phosphate + 2 H2O + H(+). The protein operates within cofactor biosynthesis; pyridoxine 5'-phosphate biosynthesis; pyridoxine 5'-phosphate from D-erythrose 4-phosphate: step 5/5. Catalyzes the complicated ring closure reaction between the two acyclic compounds 1-deoxy-D-xylulose-5-phosphate (DXP) and 3-amino-2-oxopropyl phosphate (1-amino-acetone-3-phosphate or AAP) to form pyridoxine 5'-phosphate (PNP) and inorganic phosphate. This chain is Pyridoxine 5'-phosphate synthase, found in Hydrogenovibrio crunogenus (strain DSM 25203 / XCL-2) (Thiomicrospira crunogena).